Here is a 549-residue protein sequence, read N- to C-terminus: O-fucosyltransferase 29 (549 aa).

Residues 43–63 (TVMWTWVCGFMLFSLGVISLF) form a helical; Signal-anchor for type II membrane protein membrane-spanning segment. Residue asparagine 152 is glycosylated (N-linked (GlcNAc...) asparagine). 292 to 294 (HLR) is a binding site for substrate. N-linked (GlcNAc...) asparagine glycans are attached at residues asparagine 359 and asparagine 527. Residues 506–549 (PFSYDKTSTDDEEEDMSEENHNSTSPGHVHLSSADNERDEVFPD) are disordered. Residues 540–549 (DNERDEVFPD) are compositionally biased toward basic and acidic residues.

The protein belongs to the glycosyltransferase GT106 family.

It is found in the membrane. It participates in glycan metabolism. In Arabidopsis thaliana (Mouse-ear cress), this protein is O-fucosyltransferase 29.